Here is a 125-residue protein sequence, read N- to C-terminus: Aspercryptin biosynthesis cluster protein K (125 aa).

The disordered stretch occupies residues 104 to 125; that stretch reads QRAESVAGDSRPREHRQGAVGY. Positions 113 to 125 are enriched in basic and acidic residues; the sequence is SRPREHRQGAVGY.

The protein operates within secondary metabolite biosynthesis. Part of the gene cluster that mediates the biosynthesis of aspercryptins, linear lipopeptides built from six amino acids including 2 highly unusual and nonproteogenic amino acids, 2-amino-octanoic acid (2aoa) and 2-amino-dodecanol (2adol). The core structure of aspercryptins is as follows: Ser/Ala-Thr-Ile/Val-2aoa-Asn-2adol. The first step of aspercryptin biosynthesis is the generation of the fatty acid precursors, octanoic and dodecanoic acids, by the FAS subunits atnF and atnM. The fatty acid precursors are likely transformed into the corresponding alpha-amino fatty acids in three steps. First, they are hydroxylated by the cytochrome P450 monooxygenase atnE, then oxidized to the corresponding alpha-keto acids by the NAD(P)-dependent oxidoreductase atnD, and finally converted to the alpha-amino fatty acids by the PLP-dependent aminotransferases atnH or atnJ. the alpha-amino fatty acids, 2-amino-octanoic and 2-amino-dodecanoic acids, are recognized, activated, and covalently tethered to the NRPS atnA by its fourth and sixth adenylation domains. The second module of atnA is the Thr module and contains an epimerase (E) domain responsible for the epimerization of Thr to D-allo-Thr. Additionally, despite atnA having only one epimerase domain, the first amino acid of aspercryptin A1 is D-Ser, suggesting that serine is either loaded directly as D-Ser on the first module or that the epimerase domain in the threonine module epimerizes both L-Ser and L-Thr. After condensation of the hexapeptide of aspercryptin, the C-terminal reductase (TE) domain might be involved in the reductive release and production of the aldehyde hexapeptide. Further reduction would generate aspercryptins. The variety of aspercryptins produced reflects the flexibility of the atnA NRPS, allowing incorporation of alanine instead of serine, valine for isoleucine, and a C10 fatty amino alcohol instead of the C12 version. AtnB seems to be involved in the selectivity for Ile versus Val by the third module. Moreover, type B, C and D aspercryptins have an additional N-terminal cichorine, acetyl and propionyl group respectively. The sequence is that of Aspercryptin biosynthesis cluster protein K from Emericella nidulans (strain FGSC A4 / ATCC 38163 / CBS 112.46 / NRRL 194 / M139) (Aspergillus nidulans).